Here is a 299-residue protein sequence, read N- to C-terminus: Lipoyl synthase (299 aa).

Residues C34, C39, C45, C60, C64, C67, and S273 each contribute to the [4Fe-4S] cluster site. The Radical SAM core domain maps to 46–262 (WNKKHATVMI…KYVAYSKGFL (217 aa)).

The protein belongs to the radical SAM superfamily. Lipoyl synthase family. It depends on [4Fe-4S] cluster as a cofactor.

It is found in the cytoplasm. The catalysed reaction is [[Fe-S] cluster scaffold protein carrying a second [4Fe-4S](2+) cluster] + N(6)-octanoyl-L-lysyl-[protein] + 2 oxidized [2Fe-2S]-[ferredoxin] + 2 S-adenosyl-L-methionine + 4 H(+) = [[Fe-S] cluster scaffold protein] + N(6)-[(R)-dihydrolipoyl]-L-lysyl-[protein] + 4 Fe(3+) + 2 hydrogen sulfide + 2 5'-deoxyadenosine + 2 L-methionine + 2 reduced [2Fe-2S]-[ferredoxin]. The protein operates within protein modification; protein lipoylation via endogenous pathway; protein N(6)-(lipoyl)lysine from octanoyl-[acyl-carrier-protein]: step 2/2. Functionally, catalyzes the radical-mediated insertion of two sulfur atoms into the C-6 and C-8 positions of the octanoyl moiety bound to the lipoyl domains of lipoate-dependent enzymes, thereby converting the octanoylated domains into lipoylated derivatives. The chain is Lipoyl synthase from Ehrlichia canis (strain Jake).